The chain runs to 141 residues: NADPH-dependent 7-cyano-7-deazaguanine reductase (141 aa).

Cysteine 34 serves as the catalytic Thioimide intermediate. Aspartate 41 functions as the Proton donor in the catalytic mechanism. Substrate is bound by residues 56–58 (VEL) and 75–76 (HE).

The protein belongs to the GTP cyclohydrolase I family. QueF type 1 subfamily.

The protein resides in the cytoplasm. It carries out the reaction 7-aminomethyl-7-carbaguanine + 2 NADP(+) = 7-cyano-7-deazaguanine + 2 NADPH + 3 H(+). The protein operates within tRNA modification; tRNA-queuosine biosynthesis. In terms of biological role, catalyzes the NADPH-dependent reduction of 7-cyano-7-deazaguanine (preQ0) to 7-aminomethyl-7-deazaguanine (preQ1). This chain is NADPH-dependent 7-cyano-7-deazaguanine reductase, found in Acidithiobacillus ferrooxidans (strain ATCC 23270 / DSM 14882 / CIP 104768 / NCIMB 8455) (Ferrobacillus ferrooxidans (strain ATCC 23270)).